A 51-amino-acid polypeptide reads, in one-letter code: Magnetosome protein Mms5 (51 aa).

Residues M1 to S8 are Lumenal-facing. Positions L9–G16 are LG region. Residues L9–A29 form a helical membrane-spanning segment. Topologically, residues G30 to V51 are cytoplasmic.

It belongs to the magnetosome MamD/Mms5 family. May undergo N-terminal cleavage.

The protein resides in the magnetosome membrane. In terms of biological role, might be involved in magnetite crystal growth. This chain is Magnetosome protein Mms5, found in Magnetospirillum gryphiswaldense (strain DSM 6361 / JCM 21280 / NBRC 15271 / MSR-1).